The following is a 151-amino-acid chain: 3-hydroxyacyl-[acyl-carrier-protein] dehydratase FabZ (151 aa).

Residue His49 is part of the active site.

It belongs to the thioester dehydratase family. FabZ subfamily.

The protein localises to the cytoplasm. It catalyses the reaction a (3R)-hydroxyacyl-[ACP] = a (2E)-enoyl-[ACP] + H2O. Functionally, involved in unsaturated fatty acids biosynthesis. Catalyzes the dehydration of short chain beta-hydroxyacyl-ACPs and long chain saturated and unsaturated beta-hydroxyacyl-ACPs. This is 3-hydroxyacyl-[acyl-carrier-protein] dehydratase FabZ from Bordetella petrii (strain ATCC BAA-461 / DSM 12804 / CCUG 43448).